Reading from the N-terminus, the 432-residue chain is Maltoporin (432 aa).

Residues 1–22 form the signal peptide; sequence MKKVSVIAAAVAATLAAGSAFA.

The protein belongs to the porin LamB (TC 1.B.3) family. Homotrimer formed of three 18-stranded antiparallel beta-barrels, containing three independent channels.

The protein resides in the cell outer membrane. It catalyses the reaction beta-maltose(in) = beta-maltose(out). Involved in the transport of maltose and maltodextrins. This Vibrio parahaemolyticus serotype O3:K6 (strain RIMD 2210633) protein is Maltoporin.